The primary structure comprises 238 residues: Cysteine-rich venom protein 1 (238 aa).

Residues 1-19 form the signal peptide; sequence MIAFIVLLSLAAVLQQSSG. Positions 38-164 constitute an SCP domain; that stretch reads VDKHNALRRS…STKYLYVCQY (127 aa). 8 disulfide bridges follow: Cys-75-Cys-153, Cys-92-Cys-165, Cys-148-Cys-162, Cys-184-Cys-191, Cys-187-Cys-196, Cys-200-Cys-233, Cys-209-Cys-227, and Cys-218-Cys-231. The region spanning 200-233 is the ShKT domain; the sequence is CEYEDTFSNCKALAKKTKCKTEWIKSKCPATCFC.

Belongs to the CRISP family. Expressed by the venom gland.

It localises to the secreted. Blocks contraction of smooth muscle elicited by high potassium-induced depolarization, but does not block caffeine-stimulated contraction. May target voltage-gated calcium channels on smooth muscle. This chain is Cysteine-rich venom protein 1, found in Hydrophis hardwickii (Hardwick's spine-bellied seasnake).